Reading from the N-terminus, the 156-residue chain is Acyl carrier protein, mitochondrial (156 aa).

Residues 1-68 constitute a mitochondrion transit peptide; that stretch reads MAVRVLCACV…GRVTQLCRQY (68 aa). The Carrier domain maps to 77-152; it reads EGIKDRVLYV…EIVDYIADKK (76 aa). Residue Lys-88 is modified to N6-acetyllysine. Ser-112 is subject to O-(pantetheine 4'-phosphoryl)serine.

In terms of assembly, mammalian complex I is composed of 45 different subunits. Interacts with ETFRF1. Identified in a complex composed of MALSU1, MIEF1 upstream open reading frame protein and NDUFAB1; within the trimeric complex MIEF1 upstream open reading frame protein functions as a bridging scaffold that interacts with MALSU1 on one side, and with NDUFAB1 on the other side. The complex interacts with the mitochondrial large ribosomal subunit. Interacts with alpha-1-microglobulin chain; this interaction is required for the maintenance of mitochondrial redox homeostasis. Component of the mitochondrial core iron-sulfur cluster (ISC) complex composed of NFS1, LYRM4, NDUFAB1, ISCU, FXN, and FDX2; this complex is a heterohexamer containing two copies of each monomer. Component of the cyteine desulfurase complex composed of NFS1, LYRM4 and NDUFAB1; this complex contributes to the stability and cysteine desulfurase activity of NFS1. In terms of processing, phosphopantetheinylation at Ser-112 is essential for interactions with LYR motif-containing proteins.

Its subcellular location is the mitochondrion. Functionally, carrier of the growing fatty acid chain in fatty acid biosynthesis. Accessory and non-catalytic subunit of the mitochondrial membrane respiratory chain NADH dehydrogenase (Complex I), which functions in the transfer of electrons from NADH to the respiratory chain. Accessory protein, of the core iron-sulfur cluster (ISC) assembly complex, that regulates, in association with LYRM4, the stability and the cysteine desulfurase activity of NFS1 and participates in the [2Fe-2S] clusters assembly on the scaffolding protein ISCU. The core iron-sulfur cluster (ISC) assembly complex is involved in the de novo synthesis of a [2Fe-2S] cluster, the first step of the mitochondrial iron-sulfur protein biogenesis. This process is initiated by the cysteine desulfurase complex (NFS1:LYRM4:NDUFAB1) that produces persulfide which is delivered on the scaffold protein ISCU in a FXN-dependent manner. Then this complex is stabilized by FDX2 which provides reducing equivalents to accomplish the [2Fe-2S] cluster assembly. Finally, the [2Fe-2S] cluster is transferred from ISCU to chaperone proteins, including HSCB, HSPA9 and GLRX5. The sequence is that of Acyl carrier protein, mitochondrial from Bos taurus (Bovine).